Reading from the N-terminus, the 621-residue chain is Stimulated by retinoic acid gene 6 protein-like (621 aa).

Residues 1 to 21 (MLAASTRTRQINITCDNPVDR) are Extracellular-facing. An N-linked (GlcNAc...) asparagine glycan is attached at Asn12. Residues 22 to 42 (EVFLHYSLIPSLCIILVLSFL) traverse the membrane as a helical segment. The Cytoplasmic segment spans residues 43–53 (QRREHRRQRDD). The chain crosses the membrane as a helical span at residues 54–74 (TSYLLGNHFGIIVPLDFVGTF). The Extracellular segment spans residues 75–110 (SNRWSYGAAFGATANKVMFLFSEGYQPLTVPQWAQA). Residues 111 to 131 (FVLFIGGMEVGLSYFPFFACL) form a helical membrane-spanning segment. Topologically, residues 132–137 (SSEFQL) are cytoplasmic. A helical transmembrane segment spans residues 138–158 (VSSILGFSYSLTWFVVTVLQI). Over 159–173 (SQCPHGQFLGRFETL) the chain is Extracellular. A helical membrane pass occupies residues 174-194 (VFYWPSLLCLGFLLGRFLHMF). Residues 195-258 (LKALPVHLGL…CFQFPSRMVG (64 aa)) are Cytoplasmic-facing. A helical transmembrane segment spans residues 259 to 279 (TLLLAFICLYLFIVIEFCVFL). The Extracellular portion of the chain corresponds to 280-321 (HVRDKLDMFEDKLESYLTHMNETGTLTPIILQVKELISVTKG). A helical transmembrane segment spans residues 322–342 (VWVVTILPAALTCVTYLFHIL). The Cytoplasmic portion of the chain corresponds to 343 to 383 (ACYRKHMKRLWAGDKHFLPQKFHSPSSAASVVAIARYSGWQ). A helical transmembrane segment spans residues 384 to 404 (IAYILWGYLIIHVVQSLCGVM). The Extracellular portion of the chain corresponds to 405–424 (LMYGLVLPIIHHRGLEMLQG). The chain crosses the membrane as a helical span at residues 425–445 (FGLGVLTLSIVVGLIILQVWI). Residues 446 to 476 (AGTFFLQPKLGTSDKQKPLALNNRRAFHNFN) lie on the Cytoplasmic side of the membrane. The helical transmembrane segment at 477–497 (YFLFFYNVLLGLGACLSRLLI) threads the bilayer. The Extracellular segment spans residues 498–621 (SCLLGTWLIA…TQILLTCSDC (124 aa)). A Phosphothreonine modification is found at Thr612.

In terms of processing, glycosylated. As to expression, highly expressed in liver and small intestine. Also expressed in spleen, kidney, colon, stomach, placenta, adipose tissue and isolated adipocytes.

The protein resides in the cell membrane. Acts as a high-affinity cell-surface receptor for retinol-binding protein RBP4 and mediates RBP4-dependent retinol uptake in the liver. This is Stimulated by retinoic acid gene 6 protein-like from Mus musculus (Mouse).